We begin with the raw amino-acid sequence, 342 residues long: (Lyso)-N-acylphosphatidylethanolamine lipase (342 aa).

Residues 70–323 (PLVMVHGFGG…EIEGASHHVY (254 aa)) form the AB hydrolase-1 domain.

The protein belongs to the peptidase S33 family. ABHD4/ABHD5 subfamily. In terms of tissue distribution, highest levels in the CNS and in testis, intermediate levels in liver and kidney. Hardly detectable in heart.

It catalyses the reaction N-hexadecanoyl-1,2-di-(9Z-octadecenoyl)-sn-glycero-3-phosphoethanolamine + H2O = N-hexadecanoyl-1-(9Z-octadecenoyl)-sn-glycero-3-phosphoethanolamine + (9Z)-octadecenoate + H(+). The catalysed reaction is an N-acyl-1,2-diacyl-sn-glycero-3-phosphoethanolamine + H2O = N,1-diacyl-sn-glycero-3-phosphoethanolamine + a fatty acid + H(+). It carries out the reaction N-hexadecanoyl-1-(9Z-octadecenoyl)-sn-glycero-3-phosphoethanolamine + H2O = N-hexadecanoyl-sn-glycero-3-phosphoethanolamine + (9Z)-octadecenoate + H(+). The enzyme catalyses N-octadecanoyl-1-(9Z-octadecenoyl)-sn-glycero-3-phosphoethanolamine + H2O = N-octadecanoyl-sn-glycero-3-phospho-ethanolamine + (9Z)-octadecenoate + H(+). It catalyses the reaction N-eicosanoyl-1-(9Z-octadecenoyl)-sn-glycero-3-phosphoethanolamine + H2O = N-eicosanoyl-sn-glycero-3-phosphoethanolamine + (9Z)-octadecenoate + H(+). The catalysed reaction is N,1-di-(9Z-octadecenoyl)-sn-glycero-3-phosphoethanolamine + H2O = N-(9Z-octadecenoyl)-sn-glycero-3-phosphoethanolamine + (9Z)-octadecenoate + H(+). It carries out the reaction N-(5Z,8Z,11Z,14Z-eicosatetraenoyl)-1-(9Z-octadecenoyl)-sn-glycero-3-phosphoethanolamine + H2O = N-(5Z,8Z,11Z,14Z-eicosatetraenoyl)-sn-glycero-3-phosphoethanolamine + (9Z)-octadecenoate + H(+). The enzyme catalyses 1-octadecanoyl-2-(9Z-octadecenoyl)-sn-glycero-3-phospho-(N-hexadecanoyl)-serine + H2O = 1-octadecanoyl-2-hydroxy-sn-glycero-3-phospho-(N-hexadecanoyl)-serine + (9Z)-octadecenoate + H(+). It catalyses the reaction 1-O-(1Z-octadecenoyl)-2-(9Z-octadecenoyl)-sn-glycero-3-phospho-N-hexadecanoyl-ethanolamine + H2O = 1-O-(1Z-octadecenyl)-sn-glycero-3-phospho-N-hexadecanoyl-ethanolamine + (9Z)-octadecenoate + H(+). The catalysed reaction is N,1-diacyl-sn-glycero-3-phosphoethanolamine + H2O = N-acyl-sn-glycero-3-phosphoethanolamine + a fatty acid + H(+). Lysophospholipase selective for N-acyl phosphatidylethanolamine (NAPE). Contributes to the biosynthesis of N-acyl ethanolamines, including the endocannabinoid anandamide by hydrolyzing the sn-1 and sn-2 acyl chains from N-acyl phosphatidylethanolamine (NAPE) generating glycerophospho-N-acyl ethanolamine (GP-NAE), an intermediate for N-acyl ethanolamine biosynthesis. Hydrolyzes substrates bearing saturated, monounsaturated, polyunsaturated N-acyl chains. Shows no significant activity towards other lysophospholipids, including lysophosphatidylcholine, lysophosphatidylethanolamine and lysophosphatidylserine. This chain is (Lyso)-N-acylphosphatidylethanolamine lipase, found in Mus musculus (Mouse).